Here is a 524-residue protein sequence, read N- to C-terminus: Probable cytochrome P450 12c1, mitochondrial (524 aa).

Cys470 contacts heme.

Belongs to the cytochrome P450 family. Heme is required as a cofactor.

The protein localises to the mitochondrion membrane. The chain is Probable cytochrome P450 12c1, mitochondrial (Cyp12c1) from Drosophila melanogaster (Fruit fly).